Here is a 403-residue protein sequence, read N- to C-terminus: Farnesyl pyrophosphate synthase (403 aa).

Residues Asp-156 and Asp-160 each contribute to the Mg(2+) site. Residues 156 to 160 (DDLAD) carry the DDXXD motif motif.

The protein belongs to the FPP/GGPP synthase family. It depends on Mg(2+) as a cofactor.

The enzyme catalyses isopentenyl diphosphate + (2E)-geranyl diphosphate = (2Z,6E)-farnesyl diphosphate + diphosphate. It participates in pheromone biosynthesis. Its function is as follows. Farnesyl pyrophosphate synthase involved in pheromone biosynthesis by catalyzing the formation of (2Z,6E)-farnesyl diphosphate. The chain is Farnesyl pyrophosphate synthase from Nezara viridula (Southern green stink bug).